We begin with the raw amino-acid sequence, 704 residues long: Protein NBR1 homolog (704 aa).

Methionine 1 carries the post-translational modification N-acetylmethionine. The region spanning 7–92 is the PB1 domain; the sequence is ALVVKVSYGG…KFLKINVNAG (86 aa). Polar residues-rich tracts occupy residues 95-108, 171-189, and 223-233; these read TNSAAPESSGSSTP, PQESSPCSPVTKPGSSGAS, and HSKTSGHVPNS. Disordered stretches follow at residues 95 to 114 and 171 to 233; these read TNSAAPESSGSSTPAGMPNP and PQES…VPNS. Residues 286-336 form a ZZ-type; degenerate zinc finger; the sequence is HKGIRCDGCGVLPITGPRFKSKVKEDYDLCTICYSVMGNEGDYTRMDKPVS. Residues cysteine 291, cysteine 294, cysteine 315, and cysteine 318 each coordinate Zn(2+). One can recognise a UBA domain in the interval 657–701; that stretch reads GVSEWDPILEELQEMGFCDDVTNKRLLKKNNGSIKGVVMDLLTGE. An LIR motif is present at residues 661 to 664; the sequence is WDPI.

In terms of assembly, homodimer. Interacts with ATG8A, ATG8B, ATG8C, ATG8D, ATG8F and ATG8I. Binds to ubiquitin.

The protein localises to the cytoplasm. The protein resides in the vacuole. In terms of biological role, autophagic substrate degraded in the vacuole by non-selective autophagy. Requires ATG8 protein expression to be recognized as an autophagic substrate. Acts probably as a receptor for autophagosomal degradation of ubiquitinated proteins. Targets ubiquitinated protein aggregates derived from denatured or damaged non-native proteins generated under stress conditions. Functions additively with the E3 ubiquitin-protein ligase CHIP for autophagosomal degradation of proteotoxic aggregates formed under stress conditions. The polypeptide is Protein NBR1 homolog (Arabidopsis thaliana (Mouse-ear cress)).